A 513-amino-acid polypeptide reads, in one-letter code: ATP synthase subunit alpha 2 (513 aa).

169 to 176 contributes to the ATP binding site; it reads GDRQTGKT.

It belongs to the ATPase alpha/beta chains family. F-type ATPases have 2 components, CF(1) - the catalytic core - and CF(0) - the membrane proton channel. CF(1) has five subunits: alpha(3), beta(3), gamma(1), delta(1), epsilon(1). CF(0) has three main subunits: a(1), b(2) and c(9-12). The alpha and beta chains form an alternating ring which encloses part of the gamma chain. CF(1) is attached to CF(0) by a central stalk formed by the gamma and epsilon chains, while a peripheral stalk is formed by the delta and b chains.

The protein localises to the cell inner membrane. The catalysed reaction is ATP + H2O + 4 H(+)(in) = ADP + phosphate + 5 H(+)(out). Produces ATP from ADP in the presence of a proton gradient across the membrane. The alpha chain is a regulatory subunit. This chain is ATP synthase subunit alpha 2, found in Pseudoalteromonas atlantica (strain T6c / ATCC BAA-1087).